The chain runs to 40 residues: Chaperonin HSP60, mitochondrial (40 aa).

This sequence belongs to the chaperonin (HSP60) family.

The protein localises to the mitochondrion. Its function is as follows. Implicated in mitochondrial protein import and macromolecular assembly. May facilitate the correct folding of imported proteins. May also prevent misfolding and promote the refolding and proper assembly of unfolded polypeptides generated under stress conditions in the mitochondrial matrix. In Solanum tuberosum (Potato), this protein is Chaperonin HSP60, mitochondrial.